The following is a 185-amino-acid chain: Ribosome-recycling factor (185 aa).

This sequence belongs to the RRF family.

The protein resides in the cytoplasm. Its function is as follows. Responsible for the release of ribosomes from messenger RNA at the termination of protein biosynthesis. May increase the efficiency of translation by recycling ribosomes from one round of translation to another. This chain is Ribosome-recycling factor, found in Mannheimia succiniciproducens (strain KCTC 0769BP / MBEL55E).